Here is a 111-residue protein sequence, read N- to C-terminus: Large ribosomal subunit protein uL23 (111 aa).

The protein belongs to the universal ribosomal protein uL23 family. In terms of assembly, part of the 50S ribosomal subunit. Contacts protein L29, and trigger factor when it is bound to the ribosome.

In terms of biological role, one of the early assembly proteins it binds 23S rRNA. One of the proteins that surrounds the polypeptide exit tunnel on the outside of the ribosome. Forms the main docking site for trigger factor binding to the ribosome. This is Large ribosomal subunit protein uL23 from Chlamydia abortus (strain DSM 27085 / S26/3) (Chlamydophila abortus).